Here is a 367-residue protein sequence, read N- to C-terminus: Inner membrane amino-acid ABC transporter permease protein YhdY (367 aa).

Over 1 to 36 (MTKVLLSHPPRPASHNSSRAMVWVRKNLFSSWSNSL) the chain is Cytoplasmic. Residues 37 to 57 (LTIGCIWLMWELIPPLLNWAF) form a helical membrane-spanning segment. Residues 58-99 (LQANWVGSTRADCTKAGACWVFIHERFGQFMYGLYPHDQRWR) are Periplasmic-facing. Residues 100–120 (INLALLIGLVSIAPMFWKILP) form a helical membrane-spanning segment. At 121–125 (HRGRY) the chain is on the cytoplasmic side. A helical transmembrane segment spans residues 126–146 (IAAWAVIYPLIVWWLMYGGFF). Over 147–162 (ALERVETRQWGGLTLT) the chain is Periplasmic. Residues 159–353 (LTLTLIIASV…IFCFSMSRYS (195 aa)) enclose the ABC transmembrane type-1 domain. A helical transmembrane segment spans residues 163–183 (LIIASVGIAGALPWGILLALG). Over 184–192 (RRSHMPIVR) the chain is Cytoplasmic. A helical transmembrane segment spans residues 193 to 213 (ILSVIFIEFWRGVPLITVLFM). At 214-233 (SSVMLPLFMAEGTSIDKLIR) the chain is on the periplasmic side. Residues 234–254 (ALVGVILFQSAYVAEVVRGGL) traverse the membrane as a helical segment. Over 255–291 (QALPKGQYEAAESLALGYWKTQGLVILPQALKLVIPG) the chain is Cytoplasmic. Residues 292–312 (LVNTIIALFKDTSLVIIIGLF) form a helical membrane-spanning segment. Over 313–326 (DLFSSVQQATVDPA) the chain is Periplasmic. Residues 327-347 (WLGMSTEGYVFAALIYWIFCF) form a helical membrane-spanning segment. Over 348-367 (SMSRYSQYLEKRFNTGRTPH) the chain is Cytoplasmic.

Belongs to the binding-protein-dependent transport system permease family. HisMQ subfamily.

The protein resides in the cell inner membrane. In terms of biological role, probably part of the binding-protein-dependent transport system YdhWXYZ for an amino acid; probably responsible for the translocation of the substrate across the membrane. In Escherichia coli (strain K12), this protein is Inner membrane amino-acid ABC transporter permease protein YhdY (yhdY).